Reading from the N-terminus, the 448-residue chain is N-succinylarginine dihydrolase (448 aa).

Substrate is bound by residues 19–28, Asn110, and 137–138; these read AGLSYGNVAS and HR. Glu174 is a catalytic residue. Arg214 contacts substrate. Residue His250 is part of the active site. Asp252 and Asn364 together coordinate substrate. Cys370 serves as the catalytic Nucleophile.

The protein belongs to the succinylarginine dihydrolase family. As to quaternary structure, homodimer.

The catalysed reaction is N(2)-succinyl-L-arginine + 2 H2O + 2 H(+) = N(2)-succinyl-L-ornithine + 2 NH4(+) + CO2. It participates in amino-acid degradation; L-arginine degradation via AST pathway; L-glutamate and succinate from L-arginine: step 2/5. Functionally, catalyzes the hydrolysis of N(2)-succinylarginine into N(2)-succinylornithine, ammonia and CO(2). This is N-succinylarginine dihydrolase from Pseudoalteromonas translucida (strain TAC 125).